The chain runs to 57 residues: uncharacterized protein (57 aa).

Positions 31 to 57 (HHQTSSFNPMPSEVSLHTSHNFPHTTF) are disordered. A compositionally biased stretch (polar residues) spans 33-57 (QTSSFNPMPSEVSLHTSHNFPHTTF).

This is an uncharacterized protein from Invertebrate iridescent virus 6 (IIV-6).